Consider the following 467-residue polypeptide: Mitochondrial distribution and morphology protein 10 (467 aa).

Belongs to the MDM10 family. Component of the ER-mitochondria encounter structure (ERMES) or MDM complex, composed of MMM1, MDM10, MDM12 and MDM34. Associates with the mitochondrial outer membrane sorting assembly machinery SAM(core) complex.

The protein localises to the mitochondrion outer membrane. Its function is as follows. Component of the ERMES/MDM complex, which serves as a molecular tether to connect the endoplasmic reticulum and mitochondria. Components of this complex are involved in the control of mitochondrial shape and protein biogenesis and may function in phospholipid exchange. MDM10 is involved in the late assembly steps of the general translocase of the mitochondrial outer membrane (TOM complex). Functions in the TOM40-specific route of the assembly of outer membrane beta-barrel proteins, including the association of TOM40 with the receptor TOM22 and small TOM proteins. Can associate with the SAM(core) complex as well as the MDM12-MMM1 complex, both involved in late steps of the major beta-barrel assembly pathway, that is responsible for biogenesis of all outer membrane beta-barrel proteins. May act as a switch that shuttles between both complexes and channels precursor proteins into the TOM40-specific pathway. Plays a role in mitochondrial morphology and in the inheritance of mitochondria. The protein is Mitochondrial distribution and morphology protein 10 of Ajellomyces capsulatus (strain G186AR / H82 / ATCC MYA-2454 / RMSCC 2432) (Darling's disease fungus).